The chain runs to 209 residues: Potassium-transporting ATPase KdpC subunit (209 aa).

Residues 18-38 (ALALFVLLGLGLGYSLVATGI) traverse the membrane as a helical segment.

Belongs to the KdpC family. The system is composed of three essential subunits: KdpA, KdpB and KdpC.

The protein resides in the cell inner membrane. In terms of biological role, part of the high-affinity ATP-driven potassium transport (or Kdp) system, which catalyzes the hydrolysis of ATP coupled with the electrogenic transport of potassium into the cytoplasm. This subunit acts as a catalytic chaperone that increases the ATP-binding affinity of the ATP-hydrolyzing subunit KdpB by the formation of a transient KdpB/KdpC/ATP ternary complex. The chain is Potassium-transporting ATPase KdpC subunit from Xanthomonas campestris pv. campestris (strain 8004).